Here is a 278-residue protein sequence, read N- to C-terminus: NH(3)-dependent NAD(+) synthetase (278 aa).

43-50 (GISGGVDS) lines the ATP pocket. Asp-49 contacts Mg(2+). Arg-146 serves as a coordination point for deamido-NAD(+). Thr-166 lines the ATP pocket. Glu-171 is a Mg(2+) binding site. Residues Lys-179 and Asp-186 each contribute to the deamido-NAD(+) site. ATP-binding residues include Lys-195 and Thr-217. 266 to 267 (HK) provides a ligand contact to deamido-NAD(+).

Belongs to the NAD synthetase family. As to quaternary structure, homodimer.

The catalysed reaction is deamido-NAD(+) + NH4(+) + ATP = AMP + diphosphate + NAD(+) + H(+). Its pathway is cofactor biosynthesis; NAD(+) biosynthesis; NAD(+) from deamido-NAD(+) (ammonia route): step 1/1. Functionally, catalyzes the ATP-dependent amidation of deamido-NAD to form NAD. Uses ammonia as a nitrogen source. The sequence is that of NH(3)-dependent NAD(+) synthetase from Pseudoalteromonas translucida (strain TAC 125).